The chain runs to 160 residues: Putative 4-hydroxy-4-methyl-2-oxoglutarate aldolase (160 aa).

Substrate-binding positions include 78 to 81 (GDVI) and arginine 100. Position 101 (aspartate 101) interacts with a divalent metal cation.

The protein belongs to the class II aldolase/RraA-like family. Homotrimer. A divalent metal cation serves as cofactor.

The enzyme catalyses 4-hydroxy-4-methyl-2-oxoglutarate = 2 pyruvate. It catalyses the reaction oxaloacetate + H(+) = pyruvate + CO2. Its function is as follows. Catalyzes the aldol cleavage of 4-hydroxy-4-methyl-2-oxoglutarate (HMG) into 2 molecules of pyruvate. Also contains a secondary oxaloacetate (OAA) decarboxylase activity due to the common pyruvate enolate transition state formed following C-C bond cleavage in the retro-aldol and decarboxylation reactions. The polypeptide is Putative 4-hydroxy-4-methyl-2-oxoglutarate aldolase (Mycolicibacterium vanbaalenii (strain DSM 7251 / JCM 13017 / BCRC 16820 / KCTC 9966 / NRRL B-24157 / PYR-1) (Mycobacterium vanbaalenii)).